Here is a 185-residue protein sequence, read N- to C-terminus: Ribosome-recycling factor (185 aa).

This sequence belongs to the RRF family.

It localises to the cytoplasm. Responsible for the release of ribosomes from messenger RNA at the termination of protein biosynthesis. May increase the efficiency of translation by recycling ribosomes from one round of translation to another. The sequence is that of Ribosome-recycling factor from Corynebacterium glutamicum (strain ATCC 13032 / DSM 20300 / JCM 1318 / BCRC 11384 / CCUG 27702 / LMG 3730 / NBRC 12168 / NCIMB 10025 / NRRL B-2784 / 534).